The chain runs to 598 residues: UvrABC system protein C (598 aa).

The 78-residue stretch at 14-91 (DSPGCYLHKD…IQKNMPKYNI (78 aa)) folds into the GIY-YIG domain. The region spanning 196–231 (DKIIEDLRSKMLAASKEMAFERAAEYRDLISGIATM) is the UVR domain.

The protein belongs to the UvrC family. In terms of assembly, interacts with UvrB in an incision complex.

It is found in the cytoplasm. Its function is as follows. The UvrABC repair system catalyzes the recognition and processing of DNA lesions. UvrC both incises the 5' and 3' sides of the lesion. The N-terminal half is responsible for the 3' incision and the C-terminal half is responsible for the 5' incision. The chain is UvrABC system protein C from Streptococcus pyogenes serotype M1.